Here is a 338-residue protein sequence, read N- to C-terminus: Glyceraldehyde-3-phosphate dehydrogenase, cytosolic (338 aa).

NAD(+) contacts are provided by residues 14-15 (RI), Asp-36, and Arg-83. D-glyceraldehyde 3-phosphate contacts are provided by residues 154 to 156 (SCT), Thr-185, 214 to 215 (TG), and Arg-237. The Nucleophile role is filled by Cys-155. Asn-319 is an NAD(+) binding site.

The protein belongs to the glyceraldehyde-3-phosphate dehydrogenase family. Homotetramer.

It is found in the cytoplasm. It carries out the reaction D-glyceraldehyde 3-phosphate + phosphate + NAD(+) = (2R)-3-phospho-glyceroyl phosphate + NADH + H(+). It participates in carbohydrate degradation; glycolysis; pyruvate from D-glyceraldehyde 3-phosphate: step 1/5. Functionally, key enzyme in glycolysis that catalyzes the first step of the pathway by converting D-glyceraldehyde 3-phosphate (G3P) into 3-phospho-D-glyceroyl phosphate. Essential for the maintenance of cellular ATP levels and carbohydrate metabolism. The polypeptide is Glyceraldehyde-3-phosphate dehydrogenase, cytosolic (GAPC1) (Pisum sativum (Garden pea)).